The following is a 252-amino-acid chain: Ubiquinone biosynthesis O-methyltransferase (252 aa).

Arg-45, Gly-76, Asp-97, and Met-141 together coordinate S-adenosyl-L-methionine.

The protein belongs to the methyltransferase superfamily. UbiG/COQ3 family.

It catalyses the reaction a 3-demethylubiquinol + S-adenosyl-L-methionine = a ubiquinol + S-adenosyl-L-homocysteine + H(+). The catalysed reaction is a 3-(all-trans-polyprenyl)benzene-1,2-diol + S-adenosyl-L-methionine = a 2-methoxy-6-(all-trans-polyprenyl)phenol + S-adenosyl-L-homocysteine + H(+). The protein operates within cofactor biosynthesis; ubiquinone biosynthesis. O-methyltransferase that catalyzes the 2 O-methylation steps in the ubiquinone biosynthetic pathway. This Caulobacter sp. (strain K31) protein is Ubiquinone biosynthesis O-methyltransferase.